Here is a 277-residue protein sequence, read N- to C-terminus: Large ribosomal subunit protein uL2 (277 aa).

The interval 222 to 277 (GVAMNPVDHPHGGGEGRTSGGRHPVTPWGKPTKGKKTRSNKATDKFIMRSRHQRKK) is disordered.

The protein belongs to the universal ribosomal protein uL2 family. Part of the 50S ribosomal subunit. Forms a bridge to the 30S subunit in the 70S ribosome.

In terms of biological role, one of the primary rRNA binding proteins. Required for association of the 30S and 50S subunits to form the 70S ribosome, for tRNA binding and peptide bond formation. It has been suggested to have peptidyltransferase activity; this is somewhat controversial. Makes several contacts with the 16S rRNA in the 70S ribosome. The polypeptide is Large ribosomal subunit protein uL2 (Brucella melitensis biotype 1 (strain ATCC 23456 / CCUG 17765 / NCTC 10094 / 16M)).